The chain runs to 305 residues: Ribonuclease BN (305 aa).

Zn(2+) contacts are provided by His64, His66, Asp68, His69, His141, Asp212, and His270. Asp68 acts as the Proton acceptor in catalysis.

It belongs to the RNase Z family. RNase BN subfamily. As to quaternary structure, homodimer. Requires Zn(2+) as cofactor.

Functionally, zinc phosphodiesterase, which has both exoribonuclease and endoribonuclease activities. The chain is Ribonuclease BN from Citrobacter koseri (strain ATCC BAA-895 / CDC 4225-83 / SGSC4696).